The primary structure comprises 75 residues: Defensin-like protein 58 (75 aa).

A signal peptide spans 1–23 (MNITKRYVVIFFLVMLTKSLSNS). 4 disulfides stabilise this stretch: cysteine 39–cysteine 73, cysteine 43–cysteine 66, cysteine 52–cysteine 71, and cysteine 56–cysteine 72.

The protein belongs to the DEFL family.

It is found in the secreted. In Arabidopsis thaliana (Mouse-ear cress), this protein is Defensin-like protein 58.